Reading from the N-terminus, the 425-residue chain is Serine--tRNA ligase (425 aa).

L-serine is bound at residue 228-230 (TSE). 259–261 (RSE) lines the ATP pocket. Glu282 is a binding site for L-serine. 346 to 349 (EISS) serves as a coordination point for ATP. Ser384 provides a ligand contact to L-serine.

It belongs to the class-II aminoacyl-tRNA synthetase family. Type-1 seryl-tRNA synthetase subfamily. As to quaternary structure, homodimer. The tRNA molecule binds across the dimer.

The protein localises to the cytoplasm. The catalysed reaction is tRNA(Ser) + L-serine + ATP = L-seryl-tRNA(Ser) + AMP + diphosphate + H(+). The enzyme catalyses tRNA(Sec) + L-serine + ATP = L-seryl-tRNA(Sec) + AMP + diphosphate + H(+). It functions in the pathway aminoacyl-tRNA biosynthesis; selenocysteinyl-tRNA(Sec) biosynthesis; L-seryl-tRNA(Sec) from L-serine and tRNA(Sec): step 1/1. Catalyzes the attachment of serine to tRNA(Ser). Is also able to aminoacylate tRNA(Sec) with serine, to form the misacylated tRNA L-seryl-tRNA(Sec), which will be further converted into selenocysteinyl-tRNA(Sec). This chain is Serine--tRNA ligase, found in Ehrlichia ruminantium (strain Gardel).